A 219-amino-acid polypeptide reads, in one-letter code: MRLGWLRVLGCRPGSVVSRATIVEGASTTAAGTRGCLEGILEWTFGGVRGFRSAAVAMAPIKVGDAIPSVEVFEKEPGNKVNLAELFKGKKGVLFGLPGAFTPGCSKTHLPGFVEQADALKAKGIQVVACLTVNDVFVTEEWARAHKAEGKVRLLADPSGTFGKETDLLLDDSLLFLFGNHRLKRFSMVIEDGIVKSLNVEPDGTGLTCSLAPNILSQL.

Residues 1–57 (MRLGWLRVLGCRPGSVVSRATIVEGASTTAAGTRGCLEGILEWTFGGVRGFRSAAVA) constitute a mitochondrion transit peptide. Residues 61 to 219 (IKVGDAIPSV…SLAPNILSQL (159 aa)) enclose the Thioredoxin domain. Residue Lys80 is modified to N6-acetyllysine. Lys88 carries the post-translational modification N6-acetyllysine; alternate. N6-succinyllysine; alternate is present on Lys88. Cys105 acts as the Cysteine sulfenic acid (-SOH) intermediate in catalysis. Residue Cys105 is the site of S-palmitoyl cysteine attachment. The cysteines at positions 105 and 209 are disulfide-linked. The residue at position 121 (Lys121) is an N6-succinyllysine. A Phosphoserine modification is found at Ser187. The short motif at 217-219 (SQL) is the Microbody targeting signal element.

Belongs to the peroxiredoxin family. Prx5 subfamily. As to quaternary structure, monomer. Post-translationally, S-palmitoylated. Palmitoylation occurs on the active site, inhibiting its reactivity; therefore PRDX5 palmitoylation status determines its antioxidant capacity. S-palmitoylated. Depalmitoylated by ABHD10.

The protein resides in the mitochondrion. The protein localises to the cytoplasm. It is found in the peroxisome matrix. It carries out the reaction a hydroperoxide + [thioredoxin]-dithiol = an alcohol + [thioredoxin]-disulfide + H2O. In terms of biological role, thiol-specific peroxidase that catalyzes the reduction of hydrogen peroxide and organic hydroperoxides to water and alcohols, respectively. Plays a role in cell protection against oxidative stress by detoxifying peroxides and as sensor of hydrogen peroxide-mediated signaling events. The sequence is that of Peroxiredoxin-5, mitochondrial (PRDX5) from Bos taurus (Bovine).